The primary structure comprises 456 residues: MVKMLFFAFLPLLFMTGIAAESTISSGLNSLKTKIDAKMPSGKQLFDKVVEMQKQIDAKFSNDDERAKVMGAIGSLSTAVGKFQSGDPAKIASGCLDILVGISSVLKDFAKFSPIFSILSLVVGLFSGTKAEESVGSVVKKAVQEQSDQELQEALYGVKREYAVSKAFLDGVRNETSDLSPTEVSALAANVPIYQGVRFIAMVVQRIKYIKPKTESEIKRMLTMLELFTDLCSLRDLILLDLYQLVATPGHSPNIASGIKEVSNLGREEYKKVFEDLLKNDDKETYLFLSYLYPREKNEQSRKIFNFFDLMKVKYDDRLKQDLTGVKIFSNVHWPNYFMCSSNDYLALICTKPYGSLKLDKLNDGYYSIKTTQHDPKICHRYGNYILFTHKRNDDLEKFNFVPVKLEKREIYLLSSKESPNKFAYVPQNADGALFFVDGIPSKVGYGNQGYFTLVE.

Positions 1 to 20 (MVKMLFFAFLPLLFMTGIAA) are cleaved as a signal peptide.

Belongs to the jellyfish toxin family. Type I subfamily. As to quaternary structure, oligomer. Contains disulfide bonds. In terms of tissue distribution, nematocytes.

Its subcellular location is the secreted. The protein resides in the nematocyst. It is found in the target cell membrane. In terms of biological role, may cause profound effects on the cardiovascular system of anesthetized rats (at 25 ug/kg), since the fraction containing this toxin and CfTX-2 produces an initial increase in mean arterial pressure, followed by cardiovascular collapse in all animals within 1 minute of injection. To note, the same fraction does not induce significant change in heart rate. Has weak hemolytic activity. Is lethal to crayfish. Causes cutaneous inflammation in humans. May act as a pore-forming toxin, disrupting normal transmembrane ion concentration gradients in susceptible cells. This Chironex fleckeri (Australian box jellyfish) protein is Toxin CfTX-1.